The sequence spans 235 residues: Proteasome subunit alpha type-2-B (235 aa).

Lysine 64 participates in a covalent cross-link: Glycyl lysine isopeptide (Lys-Gly) (interchain with G-Cter in ubiquitin).

This sequence belongs to the peptidase T1A family. In terms of assembly, component of the 20S core complex of the 26S proteasome. The 26S proteasome is composed of a core protease (CP), known as the 20S proteasome, capped at one or both ends by the 19S regulatory particle (RP/PA700). The 20S proteasome core is composed of 28 subunits that are arranged in four stacked rings, resulting in a barrel-shaped structure. The two end rings are each formed by seven alpha subunits, and the two central rings are each formed by seven beta subunits. The catalytic chamber with the active sites is on the inside of the barrel.

The protein resides in the cytoplasm. It localises to the nucleus. In terms of biological role, the proteasome is a multicatalytic proteinase complex which is characterized by its ability to cleave peptides with Arg, Phe, Tyr, Leu, and Glu adjacent to the leaving group at neutral or slightly basic pH. The proteasome has an ATP-dependent proteolytic activity. This is Proteasome subunit alpha type-2-B (PAB2) from Arabidopsis thaliana (Mouse-ear cress).